Here is a 303-residue protein sequence, read N- to C-terminus: tRNA pseudouridine synthase B (303 aa).

The active-site Nucleophile is the D47.

The protein belongs to the pseudouridine synthase TruB family. Type 1 subfamily.

The enzyme catalyses uridine(55) in tRNA = pseudouridine(55) in tRNA. Functionally, responsible for synthesis of pseudouridine from uracil-55 in the psi GC loop of transfer RNAs. This is tRNA pseudouridine synthase B from Legionella pneumophila (strain Paris).